A 246-amino-acid chain; its full sequence is 5-oxoprolinase subunit A (246 aa).

The protein belongs to the LamB/PxpA family. In terms of assembly, forms a complex composed of PxpA, PxpB and PxpC.

It carries out the reaction 5-oxo-L-proline + ATP + 2 H2O = L-glutamate + ADP + phosphate + H(+). Catalyzes the cleavage of 5-oxoproline to form L-glutamate coupled to the hydrolysis of ATP to ADP and inorganic phosphate. This Cupriavidus necator (strain ATCC 17699 / DSM 428 / KCTC 22496 / NCIMB 10442 / H16 / Stanier 337) (Ralstonia eutropha) protein is 5-oxoprolinase subunit A.